The following is a 337-amino-acid chain: tRNA-dihydrouridine synthase B (337 aa).

FMN contacts are provided by residues 19 to 21 (PMA) and Gln73. Catalysis depends on Cys103, which acts as the Proton donor. Residues Lys142, 203–205 (NGD), and 227–228 (GR) contribute to the FMN site.

It belongs to the Dus family. DusB subfamily. FMN is required as a cofactor.

The catalysed reaction is a 5,6-dihydrouridine in tRNA + NAD(+) = a uridine in tRNA + NADH + H(+). It carries out the reaction a 5,6-dihydrouridine in tRNA + NADP(+) = a uridine in tRNA + NADPH + H(+). Its function is as follows. Catalyzes the synthesis of 5,6-dihydrouridine (D), a modified base found in the D-loop of most tRNAs, via the reduction of the C5-C6 double bond in target uridines. The sequence is that of tRNA-dihydrouridine synthase B from Pseudomonas putida (strain ATCC 47054 / DSM 6125 / CFBP 8728 / NCIMB 11950 / KT2440).